The chain runs to 291 residues: Pituitary-specific positive transcription factor 1 (291 aa).

Residues Ala-5 to Ile-13 carry the 9aaTAD motif. The POU-specific domain maps to Met-124–Glu-198. The segment at residues Lys-214–Lys-273 is a DNA-binding region (homeobox).

It belongs to the POU transcription factor family. Class-1 subfamily. In terms of assembly, interacts with PITX1. Interacts with LHX3. Interacts with ELK1.

Its subcellular location is the nucleus. Its function is as follows. Transcription factor involved in the specification of the lactotrope, somatotrope, and thyrotrope phenotypes in the developing anterior pituitary. Specifically binds to the consensus sequence 5'-TAAAT-3'. Activates growth hormone and prolactin genes. The chain is Pituitary-specific positive transcription factor 1 (POU1F1) from Homo sapiens (Human).